The chain runs to 130 residues: MFLLWCKELIVINTNPKRSDEPVWWSLFGAGGTWFAMITPITVLVLGILAPLGVIDAEALSYERVSSFATSIIGALFIIGTLALPMWHAMHRVHHGMHDLKFHTGVAGKIACYGFATIISALAVVFIFMI.

Transmembrane regions (helical) follow at residues 35 to 55, 67 to 87, and 110 to 130; these read FAMI…LGVI, SFAT…LPMW, and IACY…IFMI.

This sequence belongs to the FrdD family. Part of an enzyme complex containing four subunits: a flavoprotein (FrdA), an iron-sulfur protein (FrdB), and two hydrophobic anchor proteins (FrdC and FrdD).

It is found in the cell inner membrane. Anchors the catalytic components of the fumarate reductase complex to the cell membrane, binds quinones. This chain is Fumarate reductase subunit D, found in Vibrio cholerae serotype O1 (strain M66-2).